The sequence spans 366 residues: Arfaptin-1 (366 aa).

Residues 1–78 (MAEESPKNSA…SSAPPLPCVL (78 aa)) are disordered. Position 2 is an N-acetylalanine (Ala2). Ser5 carries the phosphoserine modification. Residues 22-35 (GDAHEHGYNRDLKH) are compositionally biased toward basic and acidic residues. A phosphoserine mark is found at Ser36 and Ser39. A compositionally biased stretch (polar residues) spans 44-53 (SETQITSHGF). Residues Ser69, Ser79, and Ser125 each carry the phosphoserine modification. The AH domain occupies 146-346 (TVDLELEAQI…NQKQLEQTLK (201 aa)). Thr354 is subject to Phosphothreonine.

Forms homodimers or heterodimers with ARFIP2. Interacts with non-myristoylated GTP-bound ARF3, but not to GDP-bound ARF3. Interacts with ARF1. Binds with lower affinity to ARF5 and with very little affinity to ARF6. Interacts with ARL1. Interacts with ATG9A.

The protein resides in the golgi apparatus. It localises to the trans-Golgi network membrane. Plays a role in controlling biogenesis of secretory granules at the trans-Golgi network. Mechanistically, binds ARF-GTP at the neck of a growing secretory granule precursor and forms a protective scaffold. Once the granule precursor has been completely loaded, active PRKD1 phosphorylates ARFIP1 and releases it from ARFs. In turn, ARFs induce fission. Through this mechanism, ensures proper secretory granule formation at the Golgi of pancreatic beta cells. The protein is Arfaptin-1 of Rattus norvegicus (Rat).